The chain runs to 439 residues: MFFKTLKEAFKVKDVRARILFTIFILFVFRLGAHITAPGVNVQNLQQVADLPFLSMMNLVSGNAMQNYSLFAMGVSPYITASIIVQLLQMDILPKFVEWSKQGEIGRRKLNQATRYITLVLAMAQSIGITAGFQAMSSLNIVQNPNWQSYLMIGVLLTTGSMVVTWMGEQINEKGFGSGVSVIIFAGIVSGIPSAIKSVYDEKFLNVRPSEIPMSWIFVIGLILSAIVIIYVTTFVQQAERKVPIQYTKLTQGAPTSSYLPLRVNPAGVIPVIFAGSITTAPATILQFLQRSQGSNVGWLSTLQNALSYTTWTGMLFYALLIVLFTFFYSFVQVNPEKMAENLQKQGSYIPSVRPGKGTEKYVSRLLMRLATVGSLFLGLISIIPIAAQNVWGLPKIVALGGTSLLILIQVAIQAVKQLEGYLLKRKYAGFMDNPLETK.

The next 10 membrane-spanning stretches (helical) occupy residues 19 to 39, 68 to 88, 116 to 136, 151 to 171, 176 to 196, 216 to 236, 269 to 289, 312 to 332, 373 to 393, and 396 to 416; these read ILFTIFILFVFRLGAHITAPG, YSLFAMGVSPYITASIIVQLL, YITLVLAMAQSIGITAGFQAM, LMIGVLLTTGSMVVTWMGEQI, FGSGVSVIIFAGIVSGIPSAI, WIFVIGLILSAIVIIYVTTFV, VIPVIFAGSITTAPATILQFL, WTGMLFYALLIVLFTFFYSFV, VGSLFLGLISIIPIAAQNVWG, and KIVALGGTSLLILIQVAIQAV.

This sequence belongs to the SecY/SEC61-alpha family. Component of the Sec protein translocase complex. Heterotrimer consisting of SecY, SecE and SecG subunits. The heterotrimers can form oligomers, although 1 heterotrimer is thought to be able to translocate proteins. Interacts with the ribosome. Interacts with SecDF, and other proteins may be involved. Interacts with SecA.

It localises to the cell membrane. The central subunit of the protein translocation channel SecYEG. Consists of two halves formed by TMs 1-5 and 6-10. These two domains form a lateral gate at the front which open onto the bilayer between TMs 2 and 7, and are clamped together by SecE at the back. The channel is closed by both a pore ring composed of hydrophobic SecY resides and a short helix (helix 2A) on the extracellular side of the membrane which forms a plug. The plug probably moves laterally to allow the channel to open. The ring and the pore may move independently. The protein is Protein translocase subunit SecY of Lactococcus lactis subsp. cremoris (Streptococcus cremoris).